The chain runs to 156 residues: ATP synthase subunit b (156 aa).

Residues 13–33 form a helical membrane-spanning segment; the sequence is AFIIFVWCCMKFVWPPLMAAI.

Belongs to the ATPase B chain family. In terms of assembly, F-type ATPases have 2 components, F(1) - the catalytic core - and F(0) - the membrane proton channel. F(1) has five subunits: alpha(3), beta(3), gamma(1), delta(1), epsilon(1). F(0) has three main subunits: a(1), b(2) and c(10-14). The alpha and beta chains form an alternating ring which encloses part of the gamma chain. F(1) is attached to F(0) by a central stalk formed by the gamma and epsilon chains, while a peripheral stalk is formed by the delta and b chains.

The protein resides in the cell inner membrane. In terms of biological role, f(1)F(0) ATP synthase produces ATP from ADP in the presence of a proton or sodium gradient. F-type ATPases consist of two structural domains, F(1) containing the extramembraneous catalytic core and F(0) containing the membrane proton channel, linked together by a central stalk and a peripheral stalk. During catalysis, ATP synthesis in the catalytic domain of F(1) is coupled via a rotary mechanism of the central stalk subunits to proton translocation. Functionally, component of the F(0) channel, it forms part of the peripheral stalk, linking F(1) to F(0). The chain is ATP synthase subunit b from Aeromonas salmonicida (strain A449).